A 327-amino-acid chain; its full sequence is MTHLQAGLSPETLEKARLELNENPDTLHQDIQEVRDMVITRPDIGFLRTDDAFILRFLRARKFHHFEAFRLLAQYFEYRQQNLDMFKSFKATDPGIKQALKDGFPGGLANLDHYGRKILVLFAANWDQSRYTLVDILRAILLSLEAMIEDPELQVNGFVLIIDWSNFTFKQASKLTPSMLRLAIEGLQDSFPARFGGIHFVNQPWYIHALYTVIRPFLKEKTRKRIFLHGNNLNSLHQLIHPEILPSEFGGMLPPYDMGTWARTLLDHEYDDDSEYNVDSYSMPVKEVEKELSPKSMKRSQSVVDPTVLKRMDKNEEENMQPLLSLD.

The 162-residue stretch at 96–257 (IKQALKDGFP…EFGGMLPPYD (162 aa)) folds into the CRAL-TRIO domain. The interval 287-327 (EVEKELSPKSMKRSQSVVDPTVLKRMDKNEEENMQPLLSLD) is disordered. A Phosphoserine modification is found at serine 325.

In terms of assembly, forms a complex with clathrin heavy chain and gamma-adaptin.

It is found in the golgi apparatus. It localises to the trans-Golgi network membrane. The protein resides in the cytoplasmic vesicle. The protein localises to the clathrin-coated vesicle. Its subcellular location is the early endosome membrane. Required for normal morphology of late endosomes and/or lysosomes in neurons. Binds phosphatidylinositol 3,5-bisphosphate (PtdIns(3,5)P2). In Homo sapiens (Human), this protein is Clavesin-2 (CLVS2).